Here is a 561-residue protein sequence, read N- to C-terminus: MFAIDPLKHSKLYEEYGLYLRPHQINQEIKPTTIKKKELAPTIRSIRYASLLHSMLAKHAARHNGTLINPRMYADMITLGNTKVTVTKGTPKAQIDTLKMNGLTVVSKSRRNNKKKPVSDTTATTDENTNDIVTYKALTEMSTLVESFHLPSGLTLIVFDDEKYQSLIPDYINQLITYTQPHIIPTWQGIADFSDPYLRSYFRRPFELTASNLASPQKHNLSPLTRSIFNNTGREDAIIKKLYGYGEYIFIKYEGCLITWTGVYGAVAMMVNLPKRDLGLDAGDNFLKEYKQLLFYGVITDATPSGISAKSTVIKISPHKMMNPSGGALAVLSKFLEAVVSANVINATLVVYAEKGAGKTSFLSTYAERLSVASGQAVGHLSSDAYGRWLAKNKDVKEPSFEYDYVLSRDTDDTESYYEQRASELLTLHGISELAQYELLSVRKKVKMMNEMNEILIAQLENADTHSERNFYYMVSTGKNTPRTLIVEGHFNAQDATIARTDTTVLLRTINDTTQAMRDRQRSGVVQLFLRDTYYRLLPSLHTTVYPFEMLESIKRWKWVH.

As to quaternary structure, interacts with VP2.

The protein resides in the virion. It is found in the host cytoplasm. The protein localises to the host cytoskeleton. Functionally, minor inner capsid component. Displays NTPase and RNA 5'-triphosphatase (RTPase) activities. May function as a cofactor of polymerase VP2. Associates with microtubules and plays a role in the formation, structural organization and morphology of viral inclusions, where the assembly of cores and the replication of viral RNA occur. The sequence is that of Microtubule-associated protein VP6 (S6) from Lymantria dispar cypovirus 1 (isolate Rao) (LdCPV-1).